Here is a 207-residue protein sequence, read N- to C-terminus: Large ribosomal subunit protein uL4 (207 aa).

The segment at 44–85 is disordered; that stretch reads MRQGTHKTKNRAEVSGGGRKPWRQKGTGRARQGSIRSPQWRG.

This sequence belongs to the universal ribosomal protein uL4 family. In terms of assembly, part of the 50S ribosomal subunit.

In terms of biological role, one of the primary rRNA binding proteins, this protein initially binds near the 5'-end of the 23S rRNA. It is important during the early stages of 50S assembly. It makes multiple contacts with different domains of the 23S rRNA in the assembled 50S subunit and ribosome. Functionally, forms part of the polypeptide exit tunnel. The sequence is that of Large ribosomal subunit protein uL4 from Geobacillus thermodenitrificans (strain NG80-2).